An 84-amino-acid chain; its full sequence is Dolichol phosphate-mannose biosynthesis regulatory protein (84 aa).

Transmembrane regions (helical) follow at residues 11–31 (FGLV…VILL) and 49–69 (YAVL…GLFI).

It belongs to the DPM2 family. As to quaternary structure, component of the dolichol-phosphate mannose (DPM) synthase complex composed of DPM1, DPM2 and DPM3; in the complex interacts directly with DPM3. Component of the glycosylphosphatidylinositol-N-acetylglucosaminyltransferase (GPI-GnT) complex composed at least by PIGA, PIGC, PIGH, PIGP, PIGQ, PIGY and DPM2. Interacts with PIGA, PIGC and PIGQ.

It is found in the endoplasmic reticulum membrane. It functions in the pathway protein modification; protein glycosylation. Its function is as follows. Regulates the biosynthesis of dolichol phosphate-mannose. Regulatory subunit of the dolichol-phosphate mannose (DPM) synthase complex; essential for the ER localization and stable expression of DPM1. Part of the glycosylphosphatidylinositol-N-acetylglucosaminyltransferase (GPI-GnT) complex that catalyzes the transfer of N-acetylglucosamine from UDP-N-acetylglucosamine to phosphatidylinositol and participates in the first step of GPI biosynthesis. May act by regulating the GPI-GNT complex. This is Dolichol phosphate-mannose biosynthesis regulatory protein from Cricetulus griseus (Chinese hamster).